A 213-amino-acid chain; its full sequence is FMN-dependent NADH:quinone oxidoreductase 3 (213 aa).

Residues Ser10, 16–18 (SVS), and 96–99 (MYNF) contribute to the FMN site.

It belongs to the azoreductase type 1 family. As to quaternary structure, homodimer. The cofactor is FMN.

The enzyme catalyses 2 a quinone + NADH + H(+) = 2 a 1,4-benzosemiquinone + NAD(+). It carries out the reaction N,N-dimethyl-1,4-phenylenediamine + anthranilate + 2 NAD(+) = 2-(4-dimethylaminophenyl)diazenylbenzoate + 2 NADH + 2 H(+). Quinone reductase that provides resistance to thiol-specific stress caused by electrophilic quinones. Shows a preference for naphthoquinones such as plumbagin. Its function is as follows. Also exhibits azoreductase activity. Catalyzes the reductive cleavage of the azo bond in aromatic azo compounds to the corresponding amines. Preferred substrates are methyl red, amaranth and p-aminoazobenzene sulfonamide (PAABSA). The protein is FMN-dependent NADH:quinone oxidoreductase 3 of Pseudomonas aeruginosa (strain ATCC 15692 / DSM 22644 / CIP 104116 / JCM 14847 / LMG 12228 / 1C / PRS 101 / PAO1).